Consider the following 441-residue polypeptide: Na(+)/H(+) antiporter NhaA 2 (441 aa).

A run of 12 helical transmembrane segments spans residues 34–54, 77–97, 115–135, 146–166, 176–196, 199–219, 225–245, 249–269, 290–310, 317–337, 355–375, and 389–409; these read VGGA…NSPW, LTLG…VVGL, ALPM…FVAV, GWAI…AVIS, FLLT…AVFY, EINL…ALCV, SWWL…ESGV, VAGV…AGGP, VAVP…VSGL, PITL…IFLT, WIDV…SLLI, and FVKV…AVLL.

This sequence belongs to the NhaA Na(+)/H(+) (TC 2.A.33) antiporter family.

The protein resides in the cell membrane. It carries out the reaction Na(+)(in) + 2 H(+)(out) = Na(+)(out) + 2 H(+)(in). In terms of biological role, na(+)/H(+) antiporter that extrudes sodium in exchange for external protons. The protein is Na(+)/H(+) antiporter NhaA 2 of Mycobacterium sp. (strain MCS).